A 130-amino-acid chain; its full sequence is Small ribosomal subunit protein uS11 (130 aa).

The protein belongs to the universal ribosomal protein uS11 family. As to quaternary structure, part of the 30S ribosomal subunit. Interacts with proteins S7 and S18. Binds to IF-3.

Its function is as follows. Located on the platform of the 30S subunit, it bridges several disparate RNA helices of the 16S rRNA. Forms part of the Shine-Dalgarno cleft in the 70S ribosome. The chain is Small ribosomal subunit protein uS11 from Prochlorococcus marinus (strain MIT 9313).